The sequence spans 354 residues: Trans-enoyl reductase pydC (354 aa).

One can recognise an Enoyl reductase (ER) domain in the interval 16-342; it reads ANTDPVTFEI…RREVSGEKIV (327 aa). NADP(+)-binding positions include 51–54, 180–183, Y198, 245–246, and 336–337; these read CDYK, SPKN, FE, and VS.

The protein belongs to the zinc-containing alcohol dehydrogenase family. As to quaternary structure, monomer.

The protein operates within mycotoxin biosynthesis. In terms of biological role, trans-enoyl reductase; part of the gene cluster that mediates the biosynthesis of pyrrocidines, fungal natural products containing a macrocyclic para-cyclophane connected to a decahydrofluorene ring system that show potent antibiotic activities toward Gram-negative bacteria. Within the pathway, the PKS-NRPS pydA, with the help of the trans-enoyl reductase pydC, synthesize the polyketide-tyrosyl acyl thioester product which can be reductively off-loaded by the terminal reductase (R) domain in pydA. The PKS module of pydA acts in combination with the trans-acting enoyl reductase pydC to produce a methylated polyketide attached to the ACP domain. In parallel, the adenylation (A) domain of the NRPS module activated L-tyrosine, which is then transferred to the ACP domain. The condensation (C) domain subsequently link this group to the polyketide chain, forming an enzyme-bound amide. The alpha/beta hydrolase pydG is then required to catalyze the subsequent Knoevenagel condensation that affords the 3-pyrrolin-2-one ring, whereas the four proteins pydB, pydE, pydX and pydZ then function synergistically to form the cyclophane. PydB and the membrane-bound pydX and pydZ are lipid-binding proteins that can sequester and mold the pdyG product into the inverse S-shape. Binding of the medium chain reductase pydE to the complex would trigger the cascade oxidative cyclization. PydY is involved in the Diels-Alder cycloaddition that forms the decahydrofluorene core. Additional non-enzymatic hydroxylation yields pyrrocidine A2 which can be further reduced into pyrrocidine B by an endogenous reductase. The polypeptide is Trans-enoyl reductase pydC (Acremonium sp).